Consider the following 961-residue polypeptide: Ras-interacting protein 1 (961 aa).

The segment covering 1-10 (MLSGERKEGG) has biased composition (basic and acidic residues). Disordered stretches follow at residues 1–21 (MLSGERKEGGSPRFGKLHLPV), 35–70 (LGRRWPSAASVKSSSSDTGSRSSEPLPPPPPPPHVE), and 96–116 (RGSGAGGAGGPGTPGGAQRWA). The segment covering 41–57 (SAASVKSSSSDTGSRSS) has biased composition (low complexity). Residues 59 to 68 (PLPPPPPPPH) are compositionally biased toward pro residues. At Arg96 the chain carries Omega-N-methylarginine. The segment covering 98 to 110 (SGAGGAGGPGTPG) has biased composition (gly residues). A Ras-associating domain is found at 141–253 (PPGVLKIFAS…RRFELRGREE (113 aa)). The tract at residues 261–352 (AFGAADADGT…MAPGAADAQM (92 aa)) is disordered. Phosphoserine is present on residues Ser274 and Ser286. Residues 284–295 (AASGGAALASPG) show a composition bias toward low complexity. Over residues 296-307 (PGSGSGTPTGSG) the composition is skewed to gly residues. Over residues 314–327 (NLSLRRSVSELSLQ) the composition is skewed to low complexity. 4 positions are modified to phosphoserine: Ser320, Ser322, Ser325, and Ser413. The Dilute domain occupies 594-895 (GRLARLIKEA…PPAERDAVDT (302 aa)).

As to quaternary structure, interacts with Ras family members that have been activated by GTP binding. Interacts with HRAS, RAP1A, RAP2, RRAS, RAF1 and RRAS2. Interacts with MYH9 and ARHGAP29. As to expression, detected in kidney, heart, skeletal muscle, small intestine and lung.

The protein resides in the cytoplasm. It is found in the perinuclear region. The protein localises to the golgi apparatus. Its subcellular location is the golgi stack. Required for the proper formation of vascular structures that develop via both vasculogenesis and angiogenesis. Acts as a critical and vascular-specific regulator of GTPase signaling, cell architecture, and adhesion, which is essential for endothelial cell morphogenesis and blood vessel tubulogenesis. Regulates the activity of Rho GTPases in part by recruiting ARHGAP29 and suppressing RhoA signaling and dampening ROCK and MYH9 activities in endothelial cells. May act as effector for Golgi-bound HRAS and other Ras-like proteins. May promote HRAS-mediated transformation. Negative regulator of amino acid starvation-induced autophagy. This Mus musculus (Mouse) protein is Ras-interacting protein 1 (Rasip1).